A 197-amino-acid chain; its full sequence is uncharacterized protein (197 aa).

This is an uncharacterized protein from Archaeoglobus fulgidus (strain ATCC 49558 / DSM 4304 / JCM 9628 / NBRC 100126 / VC-16).